Consider the following 655-residue polypeptide: Putative esterase (655 aa).

A helical membrane pass occupies residues 9–29 (VLSLTLIYISISIGFSVYFYV). Residues Asn71, Asn89, Asn101, Asn185, Asn386, Asn449, and Asn512 are each glycosylated (N-linked (GlcNAc...) asparagine; by host). The Charge relay system role is filled by His515. N-linked (GlcNAc...) asparagine; by host glycosylation is found at Asn527 and Asn597.

Belongs to the type-B carboxylesterase/lipase family.

It localises to the membrane. The enzyme catalyses a carboxylic ester + H2O = an alcohol + a carboxylate + H(+). The protein is Putative esterase of Noctuidae (owlet moths).